Reading from the N-terminus, the 562-residue chain is Sensor histidine kinase MtrB (562 aa).

Transmembrane regions (helical) follow at residues 42–62 (VVALTFGLSLAVILALGFVLT) and 213–233 (GTMATGGMVLLVLLSGIALLV). Residues 235 to 287 (RQVVVPVRSASRIAERFAEGHLSERMPVRGEDDMARLAVSFNDMAESLSRQIT) enclose the HAMP domain. The Histidine kinase domain maps to 302–519 (DVSHELRTPL…CFRLTLPLVR (218 aa)). The tract at residues 526–562 (SPLPMKPILQPSPQASTAGQQHGTQRQRLREHAERSR) is disordered. Polar residues predominate over residues 536–551 (PSPQASTAGQQHGTQR). Basic and acidic residues predominate over residues 553–562 (RLREHAERSR).

The protein localises to the cell membrane. The enzyme catalyses ATP + protein L-histidine = ADP + protein N-phospho-L-histidine.. Member of the two-component regulatory system MtrA/MtrB. Seems to function as a membrane-associated protein kinase that phosphorylates MtrA in response to environmental signals. This Mycobacterium leprae (strain TN) protein is Sensor histidine kinase MtrB (mtrB).